We begin with the raw amino-acid sequence, 363 residues long: Peptide chain release factor 1 (363 aa).

Gln237 carries the N5-methylglutamine modification.

Belongs to the prokaryotic/mitochondrial release factor family. Methylated by PrmC. Methylation increases the termination efficiency of RF1.

Its subcellular location is the cytoplasm. In terms of biological role, peptide chain release factor 1 directs the termination of translation in response to the peptide chain termination codons UAG and UAA. The polypeptide is Peptide chain release factor 1 (Mesoplasma florum (strain ATCC 33453 / NBRC 100688 / NCTC 11704 / L1) (Acholeplasma florum)).